The sequence spans 92 residues: Small ribosomal subunit protein uS19 (92 aa).

This sequence belongs to the universal ribosomal protein uS19 family.

Functionally, protein S19 forms a complex with S13 that binds strongly to the 16S ribosomal RNA. The chain is Small ribosomal subunit protein uS19 from Rhizobium etli (strain CIAT 652).